The chain runs to 1003 residues: Cation-transporting ATPase HMA5 (1003 aa).

The tract at residues 6–25 is disordered; the sequence is LSAVAGGGRPAAAGGGGDEM. The span at 10 to 22 shows a compositional bias: gly residues; the sequence is AGGGRPAAAGGGG. HMA domains follow at residues 51–117, 133–199, and 207–273; these read EEAH…FDAE, LSAQ…FEAA, and DKIL…NGRL. Residues cysteine 62, cysteine 65, cysteine 144, and cysteine 147 each coordinate Cu cation. 8 helical membrane-spanning segments follow: residues 302 to 322, 331 to 351, 372 to 392, 396 to 416, 562 to 582, 599 to 619, 938 to 958, and 966 to 986; these read SLFL…IPFI, GPFH…QFVV, VLVV…LLYG, GFHP…VLFG, IFVP…FLCG, FVFS…CALG, FFAM…LFPF, and WLAG…SLLL.

The protein belongs to the cation transport ATPase (P-type) (TC 3.A.3) family. Type IB subfamily. As to expression, expressed in root vascular cylinder, vascular bundles and mesophyll cells of leaf blades, and anther walls and microspores of stamens.

The protein localises to the cell membrane. Metal efflux transporter that may play a role in detoxification of heavy metals, such as zinc, copper, lead and cadmium, especially in the shoots. The chain is Cation-transporting ATPase HMA5 from Oryza sativa subsp. japonica (Rice).